The primary structure comprises 341 residues: Ribosomal RNA small subunit methyltransferase H (341 aa).

S-adenosyl-L-methionine is bound by residues 47 to 49 (GGY), aspartate 64, phenylalanine 91, aspartate 109, and glutamine 116.

It belongs to the methyltransferase superfamily. RsmH family.

It localises to the cytoplasm. The catalysed reaction is cytidine(1402) in 16S rRNA + S-adenosyl-L-methionine = N(4)-methylcytidine(1402) in 16S rRNA + S-adenosyl-L-homocysteine + H(+). Its function is as follows. Specifically methylates the N4 position of cytidine in position 1402 (C1402) of 16S rRNA. The sequence is that of Ribosomal RNA small subunit methyltransferase H from Rhizobium etli (strain ATCC 51251 / DSM 11541 / JCM 21823 / NBRC 15573 / CFN 42).